Reading from the N-terminus, the 314-residue chain is Taste receptor type 2 member 42 (314 aa).

Residues methionine 1–lysine 7 are Extracellular-facing. Residues isoleucine 8–glycine 28 form a helical membrane-spanning segment. Residues leucine 29–cysteine 50 are Cytoplasmic-facing. Residues leucine 51–leucine 71 traverse the membrane as a helical segment. Residues alanine 72–threonine 101 lie on the Extracellular side of the membrane. A helical membrane pass occupies residues cysteine 102–leucine 122. The Cytoplasmic segment spans residues arginine 123–asparagine 127. The chain crosses the membrane as a helical span at residues arginine 128 to leucine 148. Topologically, residues glutamate 149–leucine 187 are extracellular. Asparagine 163 carries an N-linked (GlcNAc...) asparagine glycan. A helical membrane pass occupies residues asparagine 188–valine 208. Topologically, residues arginine 209 to serine 238 are cytoplasmic. A helical membrane pass occupies residues leucine 239–isoleucine 259. Over leucine 260–tyrosine 265 the chain is Extracellular. A helical membrane pass occupies residues threonine 266–leucine 286. Residues glycine 287–leucine 314 lie on the Cytoplasmic side of the membrane.

The protein belongs to the G-protein coupled receptor T2R family.

Its subcellular location is the membrane. Its function is as follows. Receptor that may play a role in the perception of bitterness and is gustducin-linked. May play a role in sensing the chemical composition of the gastrointestinal content. The activity of this receptor may stimulate alpha gustducin, mediate PLC-beta-2 activation and lead to the gating of TRPM5. The polypeptide is Taste receptor type 2 member 42 (TAS2R42) (Macaca mulatta (Rhesus macaque)).